Reading from the N-terminus, the 227-residue chain is NAD(P)H-quinone oxidoreductase subunit K, chloroplastic (227 aa).

The [4Fe-4S] cluster site is built by Cys43, Cys44, Cys108, and Cys139.

This sequence belongs to the complex I 20 kDa subunit family. NDH is composed of at least 16 different subunits, 5 of which are encoded in the nucleus. [4Fe-4S] cluster is required as a cofactor.

It localises to the plastid. The protein resides in the chloroplast thylakoid membrane. It catalyses the reaction a plastoquinone + NADH + (n+1) H(+)(in) = a plastoquinol + NAD(+) + n H(+)(out). The catalysed reaction is a plastoquinone + NADPH + (n+1) H(+)(in) = a plastoquinol + NADP(+) + n H(+)(out). Its function is as follows. NDH shuttles electrons from NAD(P)H:plastoquinone, via FMN and iron-sulfur (Fe-S) centers, to quinones in the photosynthetic chain and possibly in a chloroplast respiratory chain. The immediate electron acceptor for the enzyme in this species is believed to be plastoquinone. Couples the redox reaction to proton translocation, and thus conserves the redox energy in a proton gradient. In Spinacia oleracea (Spinach), this protein is NAD(P)H-quinone oxidoreductase subunit K, chloroplastic.